The chain runs to 458 residues: ATP synthase subunit beta (458 aa).

148–155 (GGAGVGKT) is a binding site for ATP.

It belongs to the ATPase alpha/beta chains family. In terms of assembly, F-type ATPases have 2 components, CF(1) - the catalytic core - and CF(0) - the membrane proton channel. CF(1) has five subunits: alpha(3), beta(3), gamma(1), delta(1), epsilon(1). CF(0) has three main subunits: a(1), b(2) and c(9-12). The alpha and beta chains form an alternating ring which encloses part of the gamma chain. CF(1) is attached to CF(0) by a central stalk formed by the gamma and epsilon chains, while a peripheral stalk is formed by the delta and b chains.

Its subcellular location is the cell inner membrane. The catalysed reaction is ATP + H2O + 4 H(+)(in) = ADP + phosphate + 5 H(+)(out). In terms of biological role, produces ATP from ADP in the presence of a proton gradient across the membrane. The catalytic sites are hosted primarily by the beta subunits. This chain is ATP synthase subunit beta, found in Shewanella loihica (strain ATCC BAA-1088 / PV-4).